Consider the following 73-residue polypeptide: Large ribosomal subunit protein bL28 (73 aa).

It belongs to the bacterial ribosomal protein bL28 family.

This Anaeromyxobacter sp. (strain Fw109-5) protein is Large ribosomal subunit protein bL28.